We begin with the raw amino-acid sequence, 568 residues long: Urease subunit alpha (568 aa).

Residues histidine 134, histidine 136, and lysine 217 each coordinate Ni(2+). Lysine 217 carries the post-translational modification N6-carboxylysine. Residue histidine 219 participates in substrate binding. Ni(2+) is bound by residues histidine 246 and histidine 272. The Proton donor role is filled by histidine 320. Residue aspartate 360 participates in Ni(2+) binding.

The protein belongs to the metallo-dependent hydrolases superfamily. Urease alpha subunit family. Heterotrimer of UreA (gamma), UreB (beta) and UreC (alpha) subunits. Three heterotrimers associate to form the active enzyme. The cofactor is Ni cation. Post-translationally, carboxylation allows a single lysine to coordinate two nickel ions.

It localises to the cytoplasm. It catalyses the reaction urea + 2 H2O + H(+) = hydrogencarbonate + 2 NH4(+). The protein operates within nitrogen metabolism; urea degradation; CO(2) and NH(3) from urea (urease route): step 1/1. In Marinomonas sp. (strain MWYL1), this protein is Urease subunit alpha.